The sequence spans 231 residues: Floral homeotic protein PMADS 1 (231 aa).

Residues 3–58 (RGKIQIKRIENQTNRQVTYSKRRNGLFKKANELTVLCDAKVSIIMISSTGKLHEFI) form the MADS-box domain. One can recognise a K-box domain in the interval 84–174 (YEKMQEQLRK…LLEFDARQED (91 aa)).

In terms of tissue distribution, predominantly expressed in petals and stamens, less in carpels and sepals.

It localises to the nucleus. Transcription factor involved in the genetic control of flower development. Necessary for the normal development of petals. Absence of the PMADS1 protein causes transformation of petals into sepals. The protein is Floral homeotic protein PMADS 1 (PMADS1) of Petunia hybrida (Petunia).